Reading from the N-terminus, the 2543-residue chain is Highly reducing polyketide synthase GPY1 (2543 aa).

The region spanning 9-435 is the Ketosynthase family 3 (KS3) domain; that stretch reads REPIAIVSMA…GSTAHAVVEF (427 aa). Catalysis depends on for beta-ketoacyl synthase activity residues cysteine 182, histidine 318, and histidine 358. The malonyl-CoA:ACP transacylase (MAT) domain stretch occupies residues 574–881; the sequence is TFTGQGAMWS…PFFATMLRNA (308 aa). The segment at 953–1089 is N-terminal hotdog fold; that stretch reads HEILGSRCRG…GRAAVLETSK (137 aa). The dehydratase (DH) domain stretch occupies residues 953-1253; it reads HEILGSRCRG…GLQMDRATSD (301 aa). The PKS/mFAS DH domain occupies 953 to 1256; the sequence is HEILGSRCRG…MDRATSDDNT (304 aa). The Proton acceptor; for dehydratase activity role is filled by histidine 985. Residues 1103-1256 form a C-terminal hotdog fold region; that stretch reads MPLKVPLKSY…MDRATSDDNT (154 aa). Catalysis depends on aspartate 1169, which acts as the Proton donor; for dehydratase activity. Positions 1399 to 1587 are methyltransferase (CMet) domain; that stretch reads NDLLYRFYEE…LDEWRNELAA (189 aa). An enoyl reductase (ER) domain region spans residues 1830 to 2136; the sequence is GILESLTMAQ…IEGTSNKQVV (307 aa). A ketoreductase (KR) domain region spans residues 2161–2335; it reads TYIITGGLGG…ASSVDLGFVE (175 aa). The Carrier domain maps to 2464-2541; the sequence is ALQPFVCTAL…DLSARVSRMI (78 aa). An O-(pantetheine 4'-phosphoryl)serine modification is found at serine 2501.

Highly reducing polyketide synthase; part of the gene cluster that mediates the biosynthesis of gibepyrone A, a 2H-pyran-2-one metabolite exhibiting a moderate antimicrobial activity against Gram-positive bacteria and yeasts. The highly reducing polyketide synthase GPY1 is sufficient to produce gibepyrone A. GPY1 uses an acetyl-CoA starter unit, three malonyl-CoA extender units, and two SAM-dependent methylations to establish the gibepyrone A carbon backbone, followed by product release upon intramolecular cyclization. The gibepyrone A derivatives gibepyrones B and D are produced by cluster-independent P450 monooxygenases, probably to protect the fungus from the toxic product. In contrast, the formation of gibepyrones E and F from gibepyrone A is a spontaneous process and independent of enzymatic activity. The sequence is that of Highly reducing polyketide synthase GPY1 from Gibberella fujikuroi (strain CBS 195.34 / IMI 58289 / NRRL A-6831) (Bakanae and foot rot disease fungus).